The chain runs to 134 residues: 6,7-dimethyl-8-ribityllumazine synthase (134 aa).

Residues phenylalanine 12, valine 44 to aspartate 46, and serine 68 to isoleucine 70 contribute to the 5-amino-6-(D-ribitylamino)uracil site. Aspartate 73–threonine 74 is a binding site for (2S)-2-hydroxy-3-oxobutyl phosphate. Residue histidine 76 is the Proton donor of the active site. Leucine 101 serves as a coordination point for 5-amino-6-(D-ribitylamino)uracil. Position 116 (arginine 116) interacts with (2S)-2-hydroxy-3-oxobutyl phosphate.

The protein belongs to the DMRL synthase family.

The catalysed reaction is (2S)-2-hydroxy-3-oxobutyl phosphate + 5-amino-6-(D-ribitylamino)uracil = 6,7-dimethyl-8-(1-D-ribityl)lumazine + phosphate + 2 H2O + H(+). It functions in the pathway cofactor biosynthesis; riboflavin biosynthesis; riboflavin from 2-hydroxy-3-oxobutyl phosphate and 5-amino-6-(D-ribitylamino)uracil: step 1/2. In terms of biological role, catalyzes the formation of 6,7-dimethyl-8-ribityllumazine by condensation of 5-amino-6-(D-ribitylamino)uracil with 3,4-dihydroxy-2-butanone 4-phosphate. This is the penultimate step in the biosynthesis of riboflavin. This Methanosarcina barkeri (strain Fusaro / DSM 804) protein is 6,7-dimethyl-8-ribityllumazine synthase.